The following is a 60-amino-acid chain: Small ribosomal subunit protein bS21 (60 aa).

The protein belongs to the bacterial ribosomal protein bS21 family.

In Mycoplasma pneumoniae (strain ATCC 29342 / M129 / Subtype 1) (Mycoplasmoides pneumoniae), this protein is Small ribosomal subunit protein bS21 (rpsU).